Consider the following 1460-residue polypeptide: MSHHQAVSQLHLFVSILDALFSDPDCLLSSFMNVTEDELDELWSWNSPLQPELRFCMHEKVSEQAALHPEKIAIDAWDGTLTYRQVEDYSTDLAQTLQLLDGSHNQIIPVLFEKSRWTSVAVLAIMKAGACFALLDPAQPEGRLRAVVQQVSARLFVSSKAQATLAARVAPAATIIPVSASKFDKVYSPCAAQQPKTTLPPVSPDQPLYIQFTSGSTGLPKGCILTHSQYTSGAIPRADAVGYRSHSRVLDFASYAFDVCIDSMLCTLAHGATLCTPSDERRMNDMSGAMRDMRVTFAGMTPSVARTLDVDILDHLDSIALGGEGVSTSDAMSWGQRTRVVNAYGPSEATVGATINDNVASKPYITMGKRKGCAIWLTDPEDSNKLVPPGAVGELLIEGPIVATDISITRRKPRKFSLKIPNSWLKGSKSFPGRHGRIYKTGDLVRFDPDGNGEPIFVGRQDQQVKLRGQRIKLAEIEFNMQKHLPADTQLAVEVIKPSGGGEQTLVAFLVEQKKNGMRHLDGNVFGSFTTKFQSALKDMTKQLAVDLPGYMVPSAYIPLWKMPLLVSCKTDRKRLREIGTSVTRQDLRRFNSVISEKKEPTTEMEIKLRSLWGKLLGGEDDFSANDNFFSMGGDSLRAMRLVAAAREAGLVLNVPDIMLNPTLSAMATKIKPLSEEATNDVPAFSLIEKDWDMNSAKAETAKLCGVDVNEVQDVYPCTPLQEGLMALSAKFQDAYVAQRIATLPSETAQRLKEAFDTAAEGSPILRTRIVNVSGRGLFQVVLKNGRLLREHGADPAEYLRRDREEAMDLGTALFRYGLVQEAGSDETHFVITMHHAVYDGWSMPLIFDRINRAFNGLQTERSVSFKHFIKHLTSLDPAEAQDYWRERLAGVNPYQFPPLPQKGYTTQADSLLEHYVSVPTTAHNKLTLATIIRGAWALVSSLYMGHPDVVFGETLTGRSAPVNGIEEIEGPMITTVPIRVRLSLDRPISDYLQAVHAQTVKQIPHEHLGLQNIRRLSKDARVACDLRTGLVLHPREDDVGEVDMEAVPANTFLPADDAEAAREALKFNTYALMLVCTLDENGFLIMASFDSKCISKDAMERVLVVMNRIVTAFLGNPESKLGDVAVLDPSEAQDAEAMRPRDVMSDSGIGTSPIDSPKLDAAMKALSPNEEKLHSILGRILGMPETEIKSSDSFFELGGDSIGAMRLVSDARAQGLTLTVAQVFQSQSLAELAASIGNEKEDKLLDILSRILGMPKSEINGSDSFFELGGDSIGAMRLVSDARAQGLNLTVAQVFQSQSLSELASSAEETDSPQTETNSNAPYAALGKEASLYSPDRIGAYLQDQSWEIVDVYPTRPLQQLAVEGTVDLPRYSLRYELIKFATPINRQKLEQACQELVARNEVLRTVFVKDESKVLGVVLSSPRVPYSEIAVPDGEDINAFSQANIQKDIEAPKPHGSS.

The tract at residues 63–468 (EQAALHPEKI…GRQDQQVKLR (406 aa)) is adenylation. Positions 600 to 675 (EPTTEMEIKL…AMATKIKPLS (76 aa)) constitute a Carrier 1 domain. The residue at position 636 (Ser636) is an O-(pantetheine 4'-phosphoryl)serine. Residues 712-1135 (VQDVYPCTPL…AVLDPSEAQD (424 aa)) form a condensation region. 2 consecutive Carrier domains span residues 1168-1241 (SPNE…GNEK) and 1236-1312 (SIGN…EETD). An O-(pantetheine 4'-phosphoryl)serine mark is found at Ser1202 and Ser1273. Residues 1303–1324 (ELASSAEETDSPQTETNSNAPY) are disordered. The span at 1313 to 1322 (SPQTETNSNA) shows a compositional bias: polar residues.

It belongs to the NRP synthetase family.

It participates in siderophore biosynthesis. Functionally, NRPS involved in extracellular coprogen-type siderophores biosynthesis. The role of extracellular siderophores in fungal virulence to plants is to supply iron to the fungus during plant infection, but not to act as phytotoxins, depriving their hosts of iron. This Alternaria brassicicola (Dark leaf spot agent) protein is Nonribosomal peptide synthetase 6.